A 359-amino-acid polypeptide reads, in one-letter code: 5-amino-6-(D-ribitylamino)uracil--L-tyrosine 4-hydroxyphenyl transferase (359 aa).

A Radical SAM core domain is found at 45–282 (VTYVVNANIN…VYAISRIFFK (238 aa)). [4Fe-4S] cluster contacts are provided by Cys-59, Cys-63, and Cys-66.

This sequence belongs to the radical SAM superfamily. CofH family. As to quaternary structure, consists of two subunits, CofG and CofH. [4Fe-4S] cluster is required as a cofactor.

It catalyses the reaction 5-amino-6-(D-ribitylamino)uracil + L-tyrosine + S-adenosyl-L-methionine = 5-amino-5-(4-hydroxybenzyl)-6-(D-ribitylimino)-5,6-dihydrouracil + 2-iminoacetate + 5'-deoxyadenosine + L-methionine + H(+). It functions in the pathway cofactor biosynthesis; coenzyme F0 biosynthesis. Its function is as follows. Catalyzes the radical-mediated synthesis of 5-amino-5-(4-hydroxybenzyl)-6-(D-ribitylimino)-5,6-dihydrouracil from 5-amino-6-(D-ribitylamino)uracil and L-tyrosine. In Methanococcus maripaludis (strain C7 / ATCC BAA-1331), this protein is 5-amino-6-(D-ribitylamino)uracil--L-tyrosine 4-hydroxyphenyl transferase.